The primary structure comprises 191 residues: Cathelicidin-related antimicrobial peptide Na_CRAMP (191 aa).

An N-terminal signal peptide occupies residues 1-22 (MEGFFWKTLLVVGALTISGTSS). Residues 23 to 161 (FPHKPLTYEE…DQPKRVKRFK (139 aa)) constitute a propeptide that is removed on maturation. 2 disulfide bridges follow: Cys81–Cys92 and Cys103–Cys120. The interval 126–154 (EEEQKQEEGNEEEKEVEKEEKEEDQKDQP) is disordered. A compositionally biased stretch (basic and acidic residues) spans 140–154 (EVEKEEKEEDQKDQP).

This sequence belongs to the cathelicidin family. As to expression, expressed by the venom gland.

It is found in the secreted. It localises to the target cell membrane. Potent antimicrobial peptide against most of Gram-negative bacteria, some Gram-positive bacteria (Bacillus) and some fungi. Adopts an amphipathic alpha helical conformation, that may allow to partition into the target membrane. No hemolytic and cytotoxic activities have been observed on mammalian cells. In Naja atra (Chinese cobra), this protein is Cathelicidin-related antimicrobial peptide Na_CRAMP.